We begin with the raw amino-acid sequence, 279 residues long: Undecaprenyl-diphosphatase (279 aa).

8 consecutive transmembrane segments (helical) span residues 2 to 22 (LFIE…TEWL), 44 to 64 (AFME…VIVI), 85 to 105 (WQLW…AVPL), 113 to 133 (FNHM…FLWI), 163 to 183 (VLSI…AIIL), 188 to 208 (TVAA…YSGL), 225 to 245 (LLVL…VIKL), and 255 to 275 (FTVF…YSVF).

The protein belongs to the UppP family.

The protein resides in the cell membrane. It catalyses the reaction di-trans,octa-cis-undecaprenyl diphosphate + H2O = di-trans,octa-cis-undecaprenyl phosphate + phosphate + H(+). In terms of biological role, catalyzes the dephosphorylation of undecaprenyl diphosphate (UPP). Confers resistance to bacitracin. This Streptococcus equi subsp. zooepidemicus (strain MGCS10565) protein is Undecaprenyl-diphosphatase.